A 201-amino-acid polypeptide reads, in one-letter code: MAGKKKSKSDSLPLDLDNIKPLDHLQPVPKTRSSSITSIESVDEPGTMKQVLLPPTIREFDELDQFESFVRDETWDNDFDYFHGKLHYYPPFVMKSCQNNLEKIKPTMNKNSKKFRRDLHHHIQKHLIKDLEKCCGYELNFGKGEIVETDNKVTWKFKDETDHGFSKEEEDLYDRHWRLELDVSCTNESAMVDVEYKSIPM.

The tract at residues 1–38 is disordered; that stretch reads MAGKKKSKSDSLPLDLDNIKPLDHLQPVPKTRSSSITS.

This sequence belongs to the RGI1 family.

It localises to the cell membrane. Involved in the control of energetic metabolism and significantly contribute to cell fitness, especially under respiratory growth conditions. The sequence is that of Respiratory growth induced protein 1 (RGI1) from Candida dubliniensis (strain CD36 / ATCC MYA-646 / CBS 7987 / NCPF 3949 / NRRL Y-17841) (Yeast).